A 146-amino-acid polypeptide reads, in one-letter code: Nuclear export protein (146 aa).

Interacts with host HSC70.

The protein localises to the host cytoplasm. May mediate the nuclear export of encapsidated genomic RNAs (ribonucleoproteins, RNPs). Interaction of viral NEP with M1-Hsc70 is thought to promote nuclear export of the viral encapsidated genomes. In Infectious salmon anemia virus (isolate Atlantic salmon/Norway/810/9/99) (ISAV), this protein is Nuclear export protein.